Consider the following 137-residue polypeptide: MKPPLAVDTSVAIPLLVRTHTAHAAVVAWWAHREAALCGHALAETYSVLTRLPRDLRLAPMDAARLLTERFAAPLLLSSRTTEHLPRVLAQFEITGGAVYDALVALAAAEHRAELATRDARAKDTYEKIGVHVVVAA.

The PINc domain maps to 7-125 (VDTSVAIPLL…ATRDARAKDT (119 aa)). Residues Asp-8 and Asp-101 each coordinate Mg(2+).

The protein belongs to the PINc/VapC protein family. As to quaternary structure, interacts with cognate antitoxin VapB27. Requires Mg(2+) as cofactor.

It localises to the secreted. Probably the toxic component of a type II toxin-antitoxin (TA) system. An RNase. Its cognate antitoxin is VapB27. The sequence is that of Ribonuclease VapC27 from Mycobacterium tuberculosis (strain ATCC 25618 / H37Rv).